A 644-amino-acid chain; its full sequence is uncharacterized protein (644 aa).

The interval 123 to 644 (VSQQIQHDQH…AVGKKKPTKK (522 aa)) is disordered. Low complexity predominate over residues 133 to 155 (PQYNKHPQNNHHPQNTQHSQNNP). Basic and acidic residues predominate over residues 159–174 (NINESENKEDLSDRSS). Residues 175–191 (DSANSEESHNSQYSQDS) show a composition bias toward polar residues. The segment covering 192–204 (GDSRNYQDSEDNK) has biased composition (basic and acidic residues). Residues 216 to 233 (NKLIVQRLTNPKITPDTI) are compositionally biased toward polar residues. Composition is skewed to basic and acidic residues over residues 236–249 (SNKD…KDLS) and 256–279 (SIKD…KSKE). Composition is skewed to acidic residues over residues 292-301 (DGDDLDDLGN) and 310-338 (SDYE…DDSN). A compositionally biased stretch (low complexity) spans 367–400 (KSPSNSKKSKTNQKLSQSSKKISSKTITNSGSKS). The segment covering 447 to 476 (SDDSDNESDNESDNESNNDSDNETDSEIDD) has biased composition (acidic residues). Positions 496–531 (PKTPMKPNNKTTSVSKPVSKPPVKSSIKNNTKNNKP) are enriched in low complexity. Positions 544–558 (KQKDQSESQSDKDID) are enriched in basic and acidic residues. A compositionally biased stretch (low complexity) spans 585 to 594 (PPKSVSLPSS). Over residues 607 to 630 (TAKTQNKSKSQPKTNGSKTSTKSI) the composition is skewed to polar residues.

This is an uncharacterized protein from Acanthamoeba polyphaga mimivirus (APMV).